A 265-amino-acid polypeptide reads, in one-letter code: MNKEYKILDNGFLKLIDFMGDDRRIVKAARISYREESVKRKDAELIDYLIRNGHTSPLEQVVFTFHVKAPIFVARQWMRHRTARINEVSGCYSLAREEFYVPLEEDLKCQTSSNSSEKEFKSLEKLSDKIKHHQKHSYELYQDMINANIPKELSRIVLPLSLYTEWYWQIDLNNLFHFIKLRLALDSPKEIKENSPKEMREYAKALISIVREIVPIAFNSFENHFLRGKRFSHEEIIAIINALDLNKLSMDAEKLNLLKDKLGID.

The ThyX domain occupies 11–224 (GFLKLIDFMG…PIAFNSFENH (214 aa)). Residues Ser-56, 79-81 (RHR), and Glu-87 each bind FAD. 76–79 (QWMR) serves as a coordination point for dUMP. A ThyX motif motif is present at residues 79–89 (RHRTARINEVS). Arg-155 contributes to the dUMP binding site. FAD contacts are provided by residues 171 to 173 (DLN) and His-177. A dUMP-binding site is contributed by Arg-182. The active-site Involved in ionization of N3 of dUMP, leading to its activation is Arg-182.

This sequence belongs to the thymidylate synthase ThyX family. In terms of assembly, homotetramer. It depends on FAD as a cofactor.

It catalyses the reaction dUMP + (6R)-5,10-methylene-5,6,7,8-tetrahydrofolate + NADPH + H(+) = dTMP + (6S)-5,6,7,8-tetrahydrofolate + NADP(+). It participates in pyrimidine metabolism; dTTP biosynthesis. Functionally, catalyzes the reductive methylation of 2'-deoxyuridine-5'-monophosphate (dUMP) to 2'-deoxythymidine-5'-monophosphate (dTMP) while utilizing 5,10-methylenetetrahydrofolate (mTHF) as the methyl donor, and NADPH and FADH(2) as the reductant. This is Flavin-dependent thymidylate synthase from Borreliella burgdorferi (strain ATCC 35210 / DSM 4680 / CIP 102532 / B31) (Borrelia burgdorferi).